The primary structure comprises 377 residues: Guanine nucleotide-binding protein subunit beta (377 aa).

7 WD repeats span residues 63-93 (GHTG…IVWN), 105-135 (LPCA…SIFN), 154-185 (GHKG…VLWD), 202-233 (GHTA…RLWD), 246-276 (GHES…RLFD), 293-323 (GDIP…YVWD), and 339-369 (SHEG…KIWA).

The protein belongs to the WD repeat G protein beta family. As to quaternary structure, g proteins are composed of 3 units, alpha, beta and gamma.

Its function is as follows. Guanine nucleotide-binding proteins (G proteins) are involved as a modulator or transducer in various transmembrane signaling systems. The beta and gamma chains are required for the GTPase activity, for replacement of GDP by GTP, and for G protein-effector interaction. In Solanum tuberosum (Potato), this protein is Guanine nucleotide-binding protein subunit beta (GB1).